The chain runs to 429 residues: Histidine--tRNA ligase (429 aa).

It belongs to the class-II aminoacyl-tRNA synthetase family. Homodimer.

It localises to the cytoplasm. The enzyme catalyses tRNA(His) + L-histidine + ATP = L-histidyl-tRNA(His) + AMP + diphosphate + H(+). The sequence is that of Histidine--tRNA ligase from Corynebacterium efficiens (strain DSM 44549 / YS-314 / AJ 12310 / JCM 11189 / NBRC 100395).